The sequence spans 195 residues: CASP-like protein IN26 (195 aa).

Residues valine 1 to glutamate 26 are Cytoplasmic-facing. A helical membrane pass occupies residues alanine 27–serine 47. Topologically, residues lysine 48–proline 75 are extracellular. The chain crosses the membrane as a helical span at residues alanine 76–leucine 96. Topologically, residues alanine 97–aspartate 120 are cytoplasmic. The chain crosses the membrane as a helical span at residues valine 121–lysine 143. Over glycine 144 to histidine 163 the chain is Extracellular. The helical transmembrane segment at leucine 164–leucine 184 threads the bilayer. Topologically, residues serine 185–lysine 195 are cytoplasmic.

Belongs to the Casparian strip membrane proteins (CASP) family. Homodimer and heterodimers.

Its subcellular location is the cell membrane. The protein is CASP-like protein IN26 (IN26) of Ipomoea nil (Japanese morning glory).